The chain runs to 211 residues: Regulator of G-protein signaling 2 (211 aa).

Disordered regions lie at residues 14-33 (GPMD…REKM) and 49-71 (LQNS…TFIK). Residues 32–66 (KMKRTLLKDWKSRLSYFLQNSSSPGKPKTGKKSKQ) are necessary for membrane association. The tract at residues 79–116 (LWSEAFDELLASKYGLAAFRAFLKSEFCEENIEFWLAC) is necessary to inhibit protein synthesis. Residues 83–199 (AFDELLASKY…LESEFYQDLC (117 aa)) form the RGS domain.

As to quaternary structure, interacts with GNAQ. Does not interact with GNAI1 and GNAI3. Interacts with EIF2B5. Interacts with PRKG1 (isoform alpha). In terms of processing, phosphorylated by protein kinase C. Phosphorylation by PRKG1 leads to activation of RGS2 activity.

It localises to the cell membrane. Its subcellular location is the cytoplasm. It is found in the nucleus. The protein localises to the nucleolus. In terms of biological role, regulates G protein-coupled receptor signaling cascades. Inhibits signal transduction by increasing the GTPase activity of G protein alpha subunits, thereby driving them into their inactive GDP-bound form. It is involved in the negative regulation of the angiotensin-activated signaling pathway. Plays a role in the regulation of blood pressure in response to signaling via G protein-coupled receptors and GNAQ. Plays a role in regulating the constriction and relaxation of vascular smooth muscle. Binds EIF2B5 and blocks its activity, thereby inhibiting the translation of mRNA into protein. This is Regulator of G-protein signaling 2 (RGS2) from Bos taurus (Bovine).